Consider the following 350-residue polypeptide: Aminomethyltransferase (350 aa).

The protein belongs to the GcvT family. The glycine cleavage system is composed of four proteins: P, T, L and H.

The enzyme catalyses N(6)-[(R)-S(8)-aminomethyldihydrolipoyl]-L-lysyl-[protein] + (6S)-5,6,7,8-tetrahydrofolate = N(6)-[(R)-dihydrolipoyl]-L-lysyl-[protein] + (6R)-5,10-methylene-5,6,7,8-tetrahydrofolate + NH4(+). The glycine cleavage system catalyzes the degradation of glycine. The protein is Aminomethyltransferase of Aquifex aeolicus (strain VF5).